Consider the following 210-residue polypeptide: MKSNRPKHIPITKIKNQLLSSLDNRALVLIGLMGVGKSVIGKRIATMLCLPFYDSDQEIEKAAQMTITELFKTYGESEFRALEQRVILNLMKNRPLVLATGGGAYINEDIRKAVHKNGISIWLKVDLDTLMQRVSKRPTRPLLQTENPKETMQKLMKQRYPIYAKANLTINSHKENRQTVAQNVIRSVQHYLDTEKNDRNNQHANQNCHC.

Gly-34–Val-39 contributes to the ATP binding site. Residue Ser-38 coordinates Mg(2+). The substrate site is built by Asp-56, Arg-80, and Gly-102. An ATP-binding site is contributed by Arg-140. Arg-159 contributes to the substrate binding site.

The protein belongs to the shikimate kinase family. Monomer. It depends on Mg(2+) as a cofactor.

Its subcellular location is the cytoplasm. The enzyme catalyses shikimate + ATP = 3-phosphoshikimate + ADP + H(+). It participates in metabolic intermediate biosynthesis; chorismate biosynthesis; chorismate from D-erythrose 4-phosphate and phosphoenolpyruvate: step 5/7. Functionally, catalyzes the specific phosphorylation of the 3-hydroxyl group of shikimic acid using ATP as a cosubstrate. This chain is Shikimate kinase, found in Bartonella henselae (strain ATCC 49882 / DSM 28221 / CCUG 30454 / Houston 1) (Rochalimaea henselae).